The sequence spans 768 residues: Pentatricopeptide repeat-containing protein At4g01030, mitochondrial (768 aa).

The transit peptide at 1 to 25 directs the protein to the mitochondrion; the sequence is MYRFLGLTIHGGLIKRGLDNSDTRV. 16 PPR repeats span residues 22-52, 53-87, 88-122, 123-153, 154-188, 189-223, 224-254, 259-289, 290-324, 325-359, 360-394, 395-429, 430-460, 461-495, 496-526, and 532-562; these read DTRVVSASMGFYGRCVSLGFANKLFDEMPKR, DDLAWNEIVMVNLRSGNWEKAVELFREMQFSGAKA, YDSTMVKLLQVCSNKEGFAEGRQIHGYVLRLGLES, NVSMCNSLIVMYSRNGKLELSRKVFNSMKDR, NLSSWNSILSSYTKLGYVDDAIGLLDEMEICGLKP, DIVTWNSLLSGYASKGLSKDAIAVLKRMQIAGLKP, STSSISSLLQAVAEPGHLKLGKAIHGYILRN, DVYVETTLIDMYIKTGYLPYARMVFDMMDAK, NIVAWNSLVSGLSYACLLKDAEALMIRMEKEGIKP, DAITWNSLASGYATLGKPEKALDVIGKMKEKGVAP, NVVSWTAIFSGCSKNGNFRNALKVFIKMQEEGVGP, NAATMSTLLKILGCLSLLHSGKEVHGFCLRKNLIC, DAYVATALVDMYGKSGDLQSAIEIFWGIKNK, SLASWNCMLMGYAMFGRGEEGIAAFSVMLEAGMEP, DAITFTSVLSVCKNSGLVQEGWKYFDLMRSR, and TIEHCSCMVDLLGRSGYLDEAWDFIQTMSLK. The interval 567–642 is type E motif; sequence IWGAFLSSCK…QDLWSWIQID (76 aa). The segment at 643–673 is type E(+) motif; it reads QTVHIFYAEGKTHPDEGDIYFELYKLVSEMK. The tract at residues 674 to 768 is type DYW motif; the sequence is KSGYVPDTSC…DGKCSCNDSW (95 aa).

The protein belongs to the PPR family. PCMP-H subfamily.

Its subcellular location is the mitochondrion. The polypeptide is Pentatricopeptide repeat-containing protein At4g01030, mitochondrial (PCMP-H65) (Arabidopsis thaliana (Mouse-ear cress)).